Consider the following 59-residue polypeptide: uncharacterized protein (59 aa).

This is an uncharacterized protein from Acidianus convivator (ATV).